We begin with the raw amino-acid sequence, 377 residues long: Dihydroorotate dehydrogenase (quinone) (377 aa).

FMN is bound by residues alanine 68 to lysine 72 and threonine 92. Lysine 72 is a substrate binding site. Asparagine 117–phenylalanine 121 lines the substrate pocket. 2 residues coordinate FMN: asparagine 149 and asparagine 182. Residue asparagine 182 participates in substrate binding. Catalysis depends on serine 185, which acts as the Nucleophile. Asparagine 187 provides a ligand contact to substrate. FMN-binding residues include lysine 224 and threonine 252. Asparagine 253–threonine 254 provides a ligand contact to substrate. FMN-binding positions include glycine 278, glycine 307, and tyrosine 328 to threonine 329.

Belongs to the dihydroorotate dehydrogenase family. Type 2 subfamily. In terms of assembly, monomer. Requires FMN as cofactor.

The protein resides in the cell membrane. The catalysed reaction is (S)-dihydroorotate + a quinone = orotate + a quinol. It participates in pyrimidine metabolism; UMP biosynthesis via de novo pathway; orotate from (S)-dihydroorotate (quinone route): step 1/1. Functionally, catalyzes the conversion of dihydroorotate to orotate with quinone as electron acceptor. The protein is Dihydroorotate dehydrogenase (quinone) of Thermobifida fusca (strain YX).